A 47-amino-acid polypeptide reads, in one-letter code: UPF0391 membrane protein rrnAC2507 (47 aa).

The next 2 helical transmembrane spans lie at 5-25 and 27-47; these read VVLVILAVVAGIAGFRGIAGL and FRVAKFLIVIFLVLALVTFLL.

The protein belongs to the UPF0391 family.

It is found in the cell membrane. The sequence is that of UPF0391 membrane protein rrnAC2507 from Haloarcula marismortui (strain ATCC 43049 / DSM 3752 / JCM 8966 / VKM B-1809) (Halobacterium marismortui).